The primary structure comprises 383 residues: Succinyl-diaminopimelate desuccinylase (383 aa).

Zn(2+) is bound at residue H79. The active site involves D81. D110 is a Zn(2+) binding site. E141 acts as the Proton acceptor in catalysis. Zn(2+) contacts are provided by E142, E170, and H355.

Belongs to the peptidase M20A family. DapE subfamily. Homodimer. Zn(2+) is required as a cofactor. It depends on Co(2+) as a cofactor.

The catalysed reaction is N-succinyl-(2S,6S)-2,6-diaminopimelate + H2O = (2S,6S)-2,6-diaminopimelate + succinate. Its pathway is amino-acid biosynthesis; L-lysine biosynthesis via DAP pathway; LL-2,6-diaminopimelate from (S)-tetrahydrodipicolinate (succinylase route): step 3/3. Its function is as follows. Catalyzes the hydrolysis of N-succinyl-L,L-diaminopimelic acid (SDAP), forming succinate and LL-2,6-diaminopimelate (DAP), an intermediate involved in the bacterial biosynthesis of lysine and meso-diaminopimelic acid, an essential component of bacterial cell walls. The polypeptide is Succinyl-diaminopimelate desuccinylase (Helicobacter pylori (strain ATCC 700392 / 26695) (Campylobacter pylori)).